The chain runs to 310 residues: 4-hydroxyproline epimerase (310 aa).

Residue Cys88 is the Proton acceptor of the active site. Residues 89–90 (GH), His208, and Asp232 each bind substrate. Cys236 acts as the Proton donor in catalysis. 237–238 (GT) contacts substrate.

Belongs to the proline racemase family. As to quaternary structure, homodimer.

The enzyme catalyses trans-4-hydroxy-L-proline = cis-4-hydroxy-D-proline. Its function is as follows. Allows intracellular utilization of 4-hydroxyproline, one of the major constituents of host collagen, by converting 4-hydroxy-L-proline to 4-hydroxy-D-proline, which can be further metabolized by intracellular 4-hydroxy-D-proline oxidases. The protein is 4-hydroxyproline epimerase of Burkholderia cenocepacia (strain HI2424).